Reading from the N-terminus, the 192-residue chain is Acireductone dioxygenase 2 (192 aa).

Residues His-99, His-101, Glu-105, and His-144 each contribute to the Fe(2+) site. Residues His-99, His-101, Glu-105, and His-144 each contribute to the Ni(2+) site.

It belongs to the acireductone dioxygenase (ARD) family. Fe(2+) serves as cofactor. The cofactor is Ni(2+).

The protein resides in the cytoplasm. It localises to the nucleus. It catalyses the reaction 1,2-dihydroxy-5-(methylsulfanyl)pent-1-en-3-one + O2 = 4-methylsulfanyl-2-oxobutanoate + formate + 2 H(+). The enzyme catalyses 1,2-dihydroxy-5-(methylsulfanyl)pent-1-en-3-one + O2 = 3-(methylsulfanyl)propanoate + CO + formate + 2 H(+). It participates in amino-acid biosynthesis; L-methionine biosynthesis via salvage pathway; L-methionine from S-methyl-5-thio-alpha-D-ribose 1-phosphate: step 5/6. Functionally, catalyzes 2 different reactions between oxygen and the acireductone 1,2-dihydroxy-3-keto-5-methylthiopentene (DHK-MTPene) depending upon the metal bound in the active site. Fe-containing acireductone dioxygenase (Fe-ARD) produces formate and 2-keto-4-methylthiobutyrate (KMTB), the alpha-ketoacid precursor of methionine in the methionine recycle pathway. Ni-containing acireductone dioxygenase (Ni-ARD) produces methylthiopropionate, carbon monoxide and formate, and does not lie on the methionine recycle pathway. This chain is Acireductone dioxygenase 2 (ARD2), found in Arabidopsis thaliana (Mouse-ear cress).